The primary structure comprises 425 residues: E3 ubiquitin-protein ligase TRIM31 (425 aa).

Residues 16–57 (CPICLDILQKPVTIDCGHNFCLKCITQIGETSCGFFKCPLCK) form an RING-type zinc finger. The B box-type zinc-finger motif lies at 90–131 (RKEATCPRHQEMFHYFCEDDGKFLCFVCRESKDHKSHNVSLI). 4 residues coordinate Zn(2+): C95, H98, C117, and H123. Coiled coils occupy residues 126-162 (HNVS…VKAQ) and 270-307 (LELE…DENR). Residues 328–360 (HKMNKTSEPGSSSAGGRTTSGPPNHHSSAPSHS) are disordered. Residues 336–360 (PGSSSAGGRTTSGPPNHHSSAPSHS) show a composition bias toward low complexity.

The protein belongs to the TRIM/RBCC family. As to quaternary structure, may form oligomers. Interacts with isoform p52shc of SHC1. Post-translationally, auto-ubiquitinated (in vitro). Up-regulated in gastric adenocarcinomas.

The protein localises to the cytoplasm. Its subcellular location is the mitochondrion. The enzyme catalyses S-ubiquitinyl-[E2 ubiquitin-conjugating enzyme]-L-cysteine + [acceptor protein]-L-lysine = [E2 ubiquitin-conjugating enzyme]-L-cysteine + N(6)-ubiquitinyl-[acceptor protein]-L-lysine.. The protein operates within protein modification; protein ubiquitination. In terms of biological role, E3 ubiquitin-protein ligase that acts as a regulator of antiviral immune response and inflammation by mediating ubiquitination of substrates. Acts as a regulator of innate immune defense against viruses by mediating 'Lys-63'-linked ubiquitination of MAVS, promoting MAVS polymerization and formation of three-stranded helical filaments on mitochondria. Acts as a negative regulator of the NLRP3 inflammasome by catalyzing 'Lys-48'-linked ubiquitination of NLRP3, leading to its degradation. Regulator of Src-induced anchorage independent cell growth. This Homo sapiens (Human) protein is E3 ubiquitin-protein ligase TRIM31.